The chain runs to 276 residues: 4-hydroxy-tetrahydrodipicolinate reductase (276 aa).

Residue 16–21 (GALGKM) coordinates NAD(+). NADP(+) is bound at residue Lys44. Residues 109–111 (GTT) and 135–138 (APNF) contribute to the NAD(+) site. His165 functions as the Proton donor/acceptor in the catalytic mechanism. His166 lines the (S)-2,3,4,5-tetrahydrodipicolinate pocket. The Proton donor role is filled by Lys169. Residue 175-176 (GT) coordinates (S)-2,3,4,5-tetrahydrodipicolinate.

It belongs to the DapB family.

It is found in the cytoplasm. The enzyme catalyses (S)-2,3,4,5-tetrahydrodipicolinate + NAD(+) + H2O = (2S,4S)-4-hydroxy-2,3,4,5-tetrahydrodipicolinate + NADH + H(+). The catalysed reaction is (S)-2,3,4,5-tetrahydrodipicolinate + NADP(+) + H2O = (2S,4S)-4-hydroxy-2,3,4,5-tetrahydrodipicolinate + NADPH + H(+). It functions in the pathway amino-acid biosynthesis; L-lysine biosynthesis via DAP pathway; (S)-tetrahydrodipicolinate from L-aspartate: step 4/4. Catalyzes the conversion of 4-hydroxy-tetrahydrodipicolinate (HTPA) to tetrahydrodipicolinate. This chain is 4-hydroxy-tetrahydrodipicolinate reductase, found in Thermosynechococcus vestitus (strain NIES-2133 / IAM M-273 / BP-1).